Reading from the N-terminus, the 204-residue chain is Phosphatidylserine decarboxylase proenzyme (204 aa).

Serine 169 functions as the Schiff-base intermediate with substrate; via pyruvic acid in the catalytic mechanism. Serine 169 carries the post-translational modification Pyruvic acid (Ser); by autocatalysis.

It belongs to the phosphatidylserine decarboxylase family. PSD-A subfamily. In terms of assembly, heterodimer of a large membrane-associated beta subunit and a small pyruvoyl-containing alpha subunit. Pyruvate serves as cofactor. In terms of processing, is synthesized initially as an inactive proenzyme. Formation of the active enzyme involves a self-maturation process in which the active site pyruvoyl group is generated from an internal serine residue via an autocatalytic post-translational modification. Two non-identical subunits are generated from the proenzyme in this reaction, and the pyruvate is formed at the N-terminus of the alpha chain, which is derived from the carboxyl end of the proenzyme. The post-translation cleavage follows an unusual pathway, termed non-hydrolytic serinolysis, in which the side chain hydroxyl group of the serine supplies its oxygen atom to form the C-terminus of the beta chain, while the remainder of the serine residue undergoes an oxidative deamination to produce ammonia and the pyruvoyl prosthetic group on the alpha chain.

The protein resides in the cell membrane. The catalysed reaction is a 1,2-diacyl-sn-glycero-3-phospho-L-serine + H(+) = a 1,2-diacyl-sn-glycero-3-phosphoethanolamine + CO2. It participates in phospholipid metabolism; phosphatidylethanolamine biosynthesis; phosphatidylethanolamine from CDP-diacylglycerol: step 2/2. Its function is as follows. Catalyzes the formation of phosphatidylethanolamine (PtdEtn) from phosphatidylserine (PtdSer). In Solibacter usitatus (strain Ellin6076), this protein is Phosphatidylserine decarboxylase proenzyme.